Consider the following 500-residue polypeptide: Probable cytosol aminopeptidase (500 aa).

Mn(2+) is bound by residues Lys268 and Asp273. Residue Lys280 is part of the active site. Mn(2+)-binding residues include Asp291, Asp350, and Glu352. Residue Arg354 is part of the active site.

It belongs to the peptidase M17 family. It depends on Mn(2+) as a cofactor.

The protein resides in the cytoplasm. It carries out the reaction Release of an N-terminal amino acid, Xaa-|-Yaa-, in which Xaa is preferably Leu, but may be other amino acids including Pro although not Arg or Lys, and Yaa may be Pro. Amino acid amides and methyl esters are also readily hydrolyzed, but rates on arylamides are exceedingly low.. It catalyses the reaction Release of an N-terminal amino acid, preferentially leucine, but not glutamic or aspartic acids.. Presumably involved in the processing and regular turnover of intracellular proteins. Catalyzes the removal of unsubstituted N-terminal amino acids from various peptides. The protein is Probable cytosol aminopeptidase of Alkaliphilus metalliredigens (strain QYMF).